The following is a 526-amino-acid chain: Microphthalmia-associated transcription factor (526 aa).

Ser-5 carries the post-translational modification Phosphoserine; by MTOR. 2 disordered regions span residues 20–54 and 155–179; these read EPKTYYELKSQPLKSSSSAEHSGASKPPLSSSTMT and VLSSPCPNQPGDHAMPPVPGSSAPN. Residues 34-44 are compositionally biased toward low complexity; the sequence is SSSSAEHSGAS. Residue Ser-180 is modified to Phosphoserine; by MAPK. A transactivation region spans residues 224–291; that stretch reads DDVIDDIISL…PANLPNIKRE (68 aa). Ser-280 carries the post-translational modification Phosphoserine. Lys-289 participates in a covalent cross-link: Glycyl lysine isopeptide (Lys-Gly) (interchain with G-Cter in SUMO). The bHLH domain maps to 311 to 364; that stretch reads QKKDNHNLIERRRRFNINDRIKELGTLIPKSNDPDMRWNKGTILKASVDYIRKL. The stretch at 355–401 forms a coiled coil; sequence KASVDYIRKLQREQQRAKDLENRQKKLEHANRHLLLRVQELEMQARA. Residues 374-395 are leucine-zipper; sequence LENRQKKLEHANRHLLLRVQEL. The interval 401–431 is DNA-binding regulation; that stretch reads AHGLSLIPSTGLCSPDLVNRIIKQEPVLENC. At Ser-405 the chain carries Phosphoserine; by GSK3. Ser-414 carries the post-translational modification Phosphoserine. Lys-423 is covalently cross-linked (Glycyl lysine isopeptide (Lys-Gly) (interchain with G-Cter in SUMO)). Residue Ser-491 is modified to Phosphoserine. The segment at 496 to 526 is disordered; the sequence is TDPLLSSVSPGASKTSSRRSSMSAEETEHAC. A compositionally biased stretch (low complexity) spans 507–519; it reads ASKTSSRRSSMSA. Ser-516 bears the Phosphoserine; by RPS6KA1 mark.

The protein belongs to the MiT/TFE family. In terms of assembly, homodimer or heterodimer; dimerization is mediated via the coiled coil region. Efficient DNA binding requires dimerization with another bHLH protein. Binds DNA in the form of homodimer or heterodimer with either TFE3, TFEB or TFEC. Interacts with small GTPases Rag (RagA/RRAGA, RagB/RRAGB, RagC/RRAGC and/or RagD/RRAGD); promoting its recruitment to lysosomal membrane in the presence of nutrients. Interacts with KARS1. Identified in a complex with HINT1 and CTNNB1. Interacts with VSX2. Post-translationally, when nutrients are present, phosphorylation by MTOR at Ser-5 via non-canonical mTORC1 pathway promotes ubiquitination by the SCF(BTRC) complex, followed by degradation. Phosphorylation at Ser-405 significantly enhances the ability to bind the tyrosinase promoter. Phosphorylation by MARK3/cTAK1 at Ser-280 promotes association with 14-3-3/YWHA adapters and retention in the cytosol. Phosphorylated at Ser-180 and Ser-516 following KIT signaling, triggering a short live activation: Phosphorylation at Ser-180 and Ser-516 by MAPK and RPS6KA1, respectively, activate the transcription factor activity but also promote ubiquitination and subsequent degradation by the proteasome. Phosphorylated in response to blue light (415nm). Ubiquitinated by the SCF(BTRC) and SCF(FBXW11) complexes following phosphorylation ar Ser-5 by MTOR, leading to its degradation by the proteasome. Ubiquitinated following phosphorylation at Ser-180, leading to subsequent degradation by the proteasome. Deubiquitinated by USP13, preventing its degradation. In terms of tissue distribution, in the adult, expressed at high levels in the heart, skin, skeletal muscle, intestine, stomach, kidney, ovary, lung, spleen and brain. In the embryo, expressed in developing eye, ear, skin and heart. Isoform M is expressed in melanocytes and also in the embryonic and adult heart while isoform A and isoform H are more widely expressed.

It localises to the nucleus. The protein resides in the cytoplasm. It is found in the lysosome membrane. Transcription factor that acts as a master regulator of melanocyte survival and differentiation as well as melanosome biogenesis. Binds to M-boxes (5'-TCATGTG-3') and symmetrical DNA sequences (E-boxes) (5'-CACGTG-3') found in the promoter of pigmentation genes, such as tyrosinase (TYR). Involved in the cellular response to amino acid availability by acting downstream of MTOR: in the presence of nutrients, MITF phosphorylation by MTOR promotes its inactivation. Upon starvation or lysosomal stress, inhibition of MTOR induces MITF dephosphorylation, resulting in transcription factor activity. Plays an important role in melanocyte development by regulating the expression of tyrosinase (TYR) and tyrosinase-related protein 1 (TYRP1). Plays a critical role in the differentiation of various cell types, such as neural crest-derived melanocytes, mast cells, osteoclasts and optic cup-derived retinal pigment epithelium. In Mus musculus (Mouse), this protein is Microphthalmia-associated transcription factor (Mitf).